The primary structure comprises 145 residues: MELVQVLKRGLQQITGHGGLRGYLRVFFRTNDAKVGTLVGEDKYGNKYYEDNKQFFGRHRWVVYTTEMNGKNTFWDVDGSMVPPEWHRWLHSMTDDPPTTKPLTARKFIWTNHKFNVTGTPEQYVPYSTTRKKIQEWIPPSTPYK.

M1 carries the N-acetylmethionine modification.

The protein belongs to the complex I NDUFA12 subunit family. Complex I is composed of 45 different subunits.

Its subcellular location is the mitochondrion inner membrane. In terms of biological role, accessory subunit of the mitochondrial membrane respiratory chain NADH dehydrogenase (Complex I), that is believed not to be involved in catalysis. Complex I functions in the transfer of electrons from NADH to the respiratory chain. The immediate electron acceptor for the enzyme is believed to be ubiquinone. The sequence is that of NADH dehydrogenase [ubiquinone] 1 alpha subcomplex subunit 12 (NDUFA12) from Homo sapiens (Human).